A 189-amino-acid chain; its full sequence is uncharacterized protein (189 aa).

It belongs to the flavoredoxin family. FMN is required as a cofactor.

This is an uncharacterized protein from Escherichia coli (strain K12).